A 422-amino-acid polypeptide reads, in one-letter code: Cytochrome P450-pinF1, plant-inducible (422 aa).

Cys369 contributes to the heme binding site.

This sequence belongs to the cytochrome P450 family. The cofactor is heme.

Its function is as follows. Not essential for virulence, but may be involved in the detoxification of plant protective agents at the site of wounding. This Rhizobium radiobacter (Agrobacterium tumefaciens) protein is Cytochrome P450-pinF1, plant-inducible (cyp103).